A 410-amino-acid chain; its full sequence is F-box/WD repeat-containing protein 4 (410 aa).

Positions 23–69 (GPALWRLPEELLLLICSYLDTRALGRLAQVCRWLRRFTSCDLLWRPI) constitute an F-box domain. WD repeat units follow at residues 159-196 (GHDEDVCHFVLANSHIVSAGGDGKIGVHKIHSTFTVKY), 198-235 (AHEQEVNCVDCKGGIIVSGSRDRTAKVWPLASGRLGQC), 289-327 (PPGAGVLDVMYESPSTLLSCGYDTYVRYWDLRTSTRKCV), and 333-372 (PHDSTFYCLQTDGNHLLATGSSYYGLVRLWDRRQRACLHA).

In terms of assembly, part of a SCF (SKP1-cullin-F-box) protein ligase complex. Interacts with POUF51.

Probably recognizes and binds to some phosphorylated proteins and promotes their ubiquitination and degradation. Likely to be involved in key signaling pathways crucial for normal limb development. May participate in Wnt signaling. The polypeptide is F-box/WD repeat-containing protein 4 (Fbxw4) (Mus musculus (Mouse)).